The primary structure comprises 161 residues: MAWDLKVKMLGGNDFLVSVTNSMTVSELKKQIAQKIGVPAFQQRLAHQTAVLQDGLTLSSLGLGPSSTVMLVVQNCSEPLSILVRNERGHSNIYEVFLTQTVDTLKKKVSQREQVHEDQFWLSFEGRPMEDKELLGEYGLKPQCTVIKHLRLRGGGGDQCA.

2 Ubiquitin-like domains span residues 2–76 (AWDL…VQNC) and 77–155 (SEPL…LRGG). 2 positions are modified to S-nitrosocysteine: Cys76 and Cys144. Positions 150 to 155 (LRLRGG) match the LRLRGG motif. Positions 151–155 (RLRGG) are involved in the ligation of specific target proteins. Residue Gly155 forms a Glycyl lysine isopeptide (Gly-Lys) (interchain with K-? in acceptor proteins) linkage. Residues 156-161 (GGDQCA) constitute a propeptide, removed in mature form.

As to quaternary structure, homodimer; disulfide-linked. Interacts with, and is conjugated to its targets by the UBE1L (E1 enzyme) and UBE2E2 (E2 enzyme). Interacts with NEDD4. Interacts with PARP12; this interaction inhibits PINK1/Parkin-dependent mitophagy. S-nitrosylation decreases its dimerization, thereby increasing the availability as well as the solubility of monomeric ISG15 for its conjugation to cellular proteins. In terms of processing, induced as an inactive, precursor protein that is cleaved by specific proteases to expose the C-terminal diglycine (LRLRGG) motif. This motif is essential not only for its conjugation to substrates but also for its recognition by the relevant processing proteases.

It is found in the cytoplasm. The protein localises to the secreted. Functionally, ubiquitin-like protein which plays a key role in the innate immune response to viral infection either via its conjugation to a target protein (ISGylation) or via its action as a free or unconjugated protein. ISGylation involves a cascade of enzymatic reactions involving E1, E2, and E3 enzymes which catalyze the conjugation of ISG15 to a lysine residue in the target protein. Its target proteins include SERPINA3G/SPI2A, JAK1, MAPK3/ERK1, PLCG1, TRIM25, STAT5A, MAPK1/ERK2 and globin. Isgylation of the viral sensor IFIH1/MDA5 promotes IFIH1/MDA5 oligomerization and triggers activation of innate immunity against a range of viruses, including coronaviruses, flaviviruses and picornaviruses. Can also isgylate: RIGI which inhibits its function in antiviral signaling response, IRF3 which inhibits its ubiquitination and degradation as well as EIF4E2 which enhances its cap structure-binding activity and translation-inhibition activity. Exhibits antiviral activity towards both DNA and RNA viruses, including influenza A and B virus, sindbis virus (SV) and herpes simplex type-1 (HHV-1). Plays a significant role in the control of neonatal Chikungunya virus (CHIKV) infection by acting as a putative immunomodulator of pro-inflammatory cytokines. Protects mice against the consequences of Chikungunya virus infection by down-regulating the pathogenic cytokine response, often denoted as the cytokine storm. Plays a role in erythroid differentiation. The secreted form of ISG15 can: induce natural killer cell proliferation, act as a chemotactic factor for neutrophils and act as a IFN-gamma-inducing cytokine playing an essential role in antimycobacterial immunity. The secreted form acts through the integrin ITGAL/ITGB2 receptor to initiate activation of SRC family tyrosine kinases including LYN, HCK and FGR which leads to secretion of IFNG and IL10; the interaction is mediated by ITGAL. The polypeptide is Ubiquitin-like protein ISG15 (Isg15) (Mus musculus (Mouse)).